The primary structure comprises 396 residues: Tyrosine--tRNA ligase (396 aa).

Residues 43 to 52 (PSSPDIHLGH) carry the 'HIGH' region motif. Residues 227–231 (KMSKS) carry the 'KMSKS' region motif. Lys230 lines the ATP pocket. Residues 338-396 (TGVIDFIILSGLAKSKSEARRLLEQGAVEINSEKISDQNTPVKCGDIIKAGKRRYSKAI) form the S4 RNA-binding domain.

The protein belongs to the class-I aminoacyl-tRNA synthetase family. TyrS type 2 subfamily. As to quaternary structure, homodimer.

The protein resides in the cytoplasm. The enzyme catalyses tRNA(Tyr) + L-tyrosine + ATP = L-tyrosyl-tRNA(Tyr) + AMP + diphosphate + H(+). In terms of biological role, catalyzes the attachment of tyrosine to tRNA(Tyr) in a two-step reaction: tyrosine is first activated by ATP to form Tyr-AMP and then transferred to the acceptor end of tRNA(Tyr). The sequence is that of Tyrosine--tRNA ligase from Dehalococcoides mccartyi (strain CBDB1).